The following is a 397-amino-acid chain: Tryptophan synthase beta chain (397 aa).

The residue at position 89 (K89) is an N6-(pyridoxal phosphate)lysine.

It belongs to the TrpB family. In terms of assembly, tetramer of two alpha and two beta chains. Pyridoxal 5'-phosphate serves as cofactor.

The enzyme catalyses (1S,2R)-1-C-(indol-3-yl)glycerol 3-phosphate + L-serine = D-glyceraldehyde 3-phosphate + L-tryptophan + H2O. Its pathway is amino-acid biosynthesis; L-tryptophan biosynthesis; L-tryptophan from chorismate: step 5/5. Functionally, the beta subunit is responsible for the synthesis of L-tryptophan from indole and L-serine. This is Tryptophan synthase beta chain from Leptospira interrogans serogroup Icterohaemorrhagiae serovar copenhageni (strain Fiocruz L1-130).